A 218-amino-acid polypeptide reads, in one-letter code: Uracil-DNA glycosylase (218 aa).

Residue Asp59 is the Proton acceptor of the active site.

Belongs to the uracil-DNA glycosylase (UDG) superfamily. UNG family.

It is found in the cytoplasm. It catalyses the reaction Hydrolyzes single-stranded DNA or mismatched double-stranded DNA and polynucleotides, releasing free uracil.. Its function is as follows. Excises uracil residues from the DNA which can arise as a result of misincorporation of dUMP residues by DNA polymerase or due to deamination of cytosine. The polypeptide is Uracil-DNA glycosylase (Staphylococcus aureus (strain bovine RF122 / ET3-1)).